The chain runs to 986 residues: Translation initiation factor IF-2 (986 aa).

Basic and acidic residues predominate over residues 75–94 (KRLSRLEEQSRKTYEKEQHL). Disordered regions lie at residues 75–105 (KRLS…APPL), 127–148 (PPSK…PDAP), 185–258 (SEVP…VSFD), and 277–394 (GRHK…HEED). Low complexity-rich tracts occupy residues 185 to 210 (SEVP…ESPL) and 218 to 235 (SEPQ…LPEI). Residues 292-313 (DALKDEFEPKPAEESRVEEKVV) show a composition bias toward basic and acidic residues. Residues 315–338 (AKKPPVKAAADVKPKPVVADSSSS) are compositionally biased toward low complexity. Basic residues predominate over residues 339-348 (AKKKGKKKKK). The tr-type G domain occupies 483–653 (TRPPVVTIMG…LTEAEMRELR (171 aa)). Residues 492-499 (GHVDHGKT) form a G1 region. 492-499 (GHVDHGKT) contributes to the GTP binding site. A G2 region spans residues 517–521 (GITQH). Residues 539–542 (DTPG) form a G3 region. Residues 539-543 (DTPGH) and 593-596 (NKID) each bind GTP. Positions 593 to 596 (NKID) are G4. The G5 stretch occupies residues 629–631 (SAK).

It belongs to the TRAFAC class translation factor GTPase superfamily. Classic translation factor GTPase family. IF-2 subfamily.

Its subcellular location is the cytoplasm. One of the essential components for the initiation of protein synthesis. Protects formylmethionyl-tRNA from spontaneous hydrolysis and promotes its binding to the 30S ribosomal subunits. Also involved in the hydrolysis of GTP during the formation of the 70S ribosomal complex. In Pelodictyon phaeoclathratiforme (strain DSM 5477 / BU-1), this protein is Translation initiation factor IF-2.